An 8384-amino-acid polypeptide reads, in one-letter code: Mucin-19 (8384 aa).

The first 21 residues, M1–A21, serve as a signal peptide directing secretion. Disordered regions lie at residues A33–G197, S222–G247, G279–G305, and Q332–T467. Low complexity-rich tracts occupy residues S35–G48 and G88–G98. Over residues D169–D184 the composition is skewed to basic and acidic residues. Polar residues predominate over residues A187–G197. Over residues G279 to S299 the composition is skewed to polar residues. The segment covering G359 to S369 has biased composition (low complexity). The span at A370 to S381 shows a compositional bias: polar residues. 2 stretches are compositionally biased toward low complexity: residues S424 to S435 and T443 to G452. 3 VWFD domains span residues G478 to N649, G815 to I995, and T1274 to S1447. 8 disulfide bridges follow: C502/C648, C817/C952, C838/C994, C857/C865, C1276/C1411, C1298/C1446, C1307/C1408, and C1323/C1330. 27 disordered regions span residues T1680–T1699, A1732–G2464, L2484–S2526, R2540–T2827, S2850–I2917, V2984–T3027, G3075–G3368, T3386–G3428, E3585–L3628, G3667–P3736, T4105–S4147, S4187–T4251, G4315–V4390, T4414–Q4455, T4510–P4583, T4790–P4843, S4895–T4930, T5130–G5161, V5429–K5452, G5464–G5494, G5880–M5918, T6069–S6403, G6440–K6918, G6953–K7223, S7250–G7749, K7783–S7975, and S8020–P8133. 3 stretches are compositionally biased toward low complexity: residues A1732 to A1746, P1772 to P1813, and G1820 to S1833. Polar residues predominate over residues V1835–S1860. The span at P1868–G1879 shows a compositional bias: low complexity. Over residues T1880–G1905 the composition is skewed to polar residues. Residues A1909–T1921 are compositionally biased toward low complexity. Positions G1950–G1968 are enriched in polar residues. Low complexity-rich tracts occupy residues T1969–S1983 and G2013–S2049. The segment covering N2055–T2100 has biased composition (polar residues). 2 stretches are compositionally biased toward low complexity: residues T2132–S2147 and G2159–S2170. 2 stretches are compositionally biased toward polar residues: residues R2171–F2186 and G2209–L2225. Composition is skewed to low complexity over residues T2233 to S2246 and S2280 to S2313. The approximate repeats of G-V-T-G-T-T-G-P-S-A stretch occupies residues G2238 to A6086. Polar residues-rich tracts occupy residues R2316 to P2332 and A2354 to P2372. A compositionally biased stretch (gly residues) spans S2403–T2419. Positions T2420–G2441 are enriched in low complexity. Polar residues predominate over residues Q2442 to E2460. 3 stretches are compositionally biased toward low complexity: residues S2512–S2526, G2545–K2571, and T2578–G2589. 2 stretches are compositionally biased toward polar residues: residues T2595 to K2610 and T2638 to R2653. Positions V2654–S2681 are enriched in low complexity. Polar residues-rich tracts occupy residues S2695–T2748 and T2755–P2770. The segment covering A2787 to G2799 has biased composition (low complexity). Polar residues-rich tracts occupy residues Q2800–T2827, S2850–P2859, and A2874–R2892. The segment covering T2894–A2910 has biased composition (low complexity). Residues V2984–K2998 show a composition bias toward polar residues. A compositionally biased stretch (low complexity) spans T2999–T3027. Over residues P3099–P3109 the composition is skewed to polar residues. Low complexity predominate over residues S3114–S3130. The span at V3131–P3159 shows a compositional bias: polar residues. The segment covering T3172 to V3188 has biased composition (low complexity). The segment covering Q3189–S3224 has biased composition (polar residues). Over residues G3225–S3277 the composition is skewed to low complexity. Composition is skewed to polar residues over residues I3303–T3317 and T3324–G3362. The span at S3390–T3417 shows a compositional bias: low complexity. 2 stretches are compositionally biased toward polar residues: residues V3702–P3728 and T4105–P4116. Over residues S4117–T4126 the composition is skewed to low complexity. Over residues V4320–P4346 the composition is skewed to polar residues. 2 stretches are compositionally biased toward low complexity: residues S4347–G4385 and T4414–S4426. Composition is skewed to low complexity over residues V5469–G5494 and T5889–G5903. Polar residues-rich tracts occupy residues I5908–M5918, K6071–T6103, and T6111–T6121. The span at T6156–T6168 shows a compositional bias: low complexity. 2 stretches are compositionally biased toward polar residues: residues E6217 to T6248 and A6257 to T6275. Low complexity predominate over residues T6284 to S6295. Composition is skewed to polar residues over residues G6303–T6323 and E6336–K6346. Low complexity predominate over residues S6378–T6389. Polar residues-rich tracts occupy residues G6440–A6457 and T6470–I6503. Positions G6507–G6523 are enriched in low complexity. Polar residues predominate over residues T6560–A6571. Positions T6581–T6597 are enriched in low complexity. Residues V6599–T6608 are compositionally biased toward polar residues. Residues G6612–A6628 are compositionally biased toward low complexity. 2 stretches are compositionally biased toward polar residues: residues R6669 to T6680 and A6689 to T6698. The span at T6707 to A6718 shows a compositional bias: low complexity. The segment covering T6752–R6766 has biased composition (polar residues). A compositionally biased stretch (low complexity) spans T6767–G6781. Polar residues predominate over residues S6794 to A6817. Low complexity predominate over residues S6827 to S6842. Polar residues predominate over residues V6843–P6875. Low complexity predominate over residues T6887–G6901. 2 stretches are compositionally biased toward polar residues: residues S6902–V6911 and G6953–A6964. Residues G6966–L6994 are compositionally biased toward low complexity. Positions S7006 to G7041 are enriched in polar residues. Positions K7045–E7074 are enriched in low complexity. A compositionally biased stretch (polar residues) spans S7085–P7094. A compositionally biased stretch (low complexity) spans G7095–L7112. Polar residues predominate over residues T7143–V7158. Low complexity-rich tracts occupy residues S7201 to T7215 and S7250 to L7276. Polar residues predominate over residues S7293–G7311. Residues T7379–S7397 are compositionally biased toward low complexity. Polar residues predominate over residues T7403–R7421. Positions T7422 to L7435 are enriched in low complexity. Residues S7465–G7483 are compositionally biased toward polar residues. The segment covering P7525–V7537 has biased composition (gly residues). 2 stretches are compositionally biased toward polar residues: residues P7544 to I7557 and A7571 to G7596. Positions M7600–L7613 are enriched in low complexity. 2 stretches are compositionally biased toward polar residues: residues S7642–G7669 and S7698–G7708. The span at T7715–G7732 shows a compositional bias: low complexity. Residues K7783 to H7811 are compositionally biased toward polar residues. A compositionally biased stretch (low complexity) spans T7812–S7828. A compositionally biased stretch (polar residues) spans D7830 to G7851. Residues S7852–T7861 show a composition bias toward low complexity. A compositionally biased stretch (polar residues) spans G7862–A7891. The segment covering T7892 to T7917 has biased composition (low complexity). Residues I7918 to R7934 show a composition bias toward polar residues. Positions G7938–V7952 are enriched in low complexity. 4 stretches are compositionally biased toward polar residues: residues A7953–L7965, S8020–T8040, T8048–G8081, and E8110–V8120. Positions P8159–E8225 constitute a VWFC domain. 4 cysteine pairs are disulfide-bonded: C8288–C8339, C8306–C8353, C8315–C8369, and C8319–C8371. In terms of domain architecture, CTCK spans C8288 to Q8376.

Expressed corneal epithelial cells, conjunctival goblet and epithelial cells and lacrimal gland cells (at protein level). Expressed by mucous cells of the submandibular gland and submucosal gland of the trachea. Expressed by middle ear epithelial cells.

It localises to the secreted. May function in ocular mucus homeostasis. This Homo sapiens (Human) protein is Mucin-19 (MUC19).